The primary structure comprises 333 residues: tRNA (guanine(37)-N(1))/4-demethylwyosine(37)-methyltransferase Taw22 (333 aa).

Residues Arg-174, Phe-191, 213 to 214 (EI), and 243 to 244 (DV) each bind S-adenosyl-L-methionine.

The protein belongs to the class I-like SAM-binding methyltransferase superfamily. TRM5/TYW2 family.

The protein resides in the cytoplasm. It carries out the reaction guanosine(37) in tRNA + S-adenosyl-L-methionine = N(1)-methylguanosine(37) in tRNA + S-adenosyl-L-homocysteine + H(+). The enzyme catalyses 4-demethylwyosine(37) in tRNA(Phe) + S-adenosyl-L-methionine = isowyosine(37) in tRNA(Phe) + S-adenosyl-L-homocysteine + H(+). Functionally, catalyzes both the N1-methylation of guanosine and the C7-methylation of 4-demethylwyosine (imG-14) at position 37 in tRNA(Phe). The protein is tRNA (guanine(37)-N(1))/4-demethylwyosine(37)-methyltransferase Taw22 of Pyrococcus abyssi (strain GE5 / Orsay).